A 1358-amino-acid chain; its full sequence is Tenascin-R (1358 aa).

The N-terminal stretch at 1 to 31 is a signal peptide; sequence MGADGETVVLKNMLIGINLILLGSMIKPSEC. Thr36 and Thr37 each carry an O-linked (GalNAc...) threonine glycan. Asn55 carries an N-linked (GlcNAc...) asparagine glycan. Residues 127-157 are a coiled coil; the sequence is CASSAQVLQELLSRIEMLEREVSVLRDQCNA. A glycan (O-linked (Xyl...) (chondroitin sulfate) serine) is linked at Ser176. N-linked (GlcNAc...) asparagine glycosylation is found at Asn180 and Asn198. EGF-like domains are found at residues 188-199, 219-230, and 250-261; these read CICNEGWFGKNC, CICDSEYSGDDC, and CVCEEPYTGEDC. Ser271 carries an O-linked (Xyl...) (chondroitin sulfate) serine glycan. Asn278 is a glycosylation site (N-linked (GlcNAc...) asparagine). The EGF-like 4 domain occupies 281-292; sequence CLCEEGYVGEDC. Intrachain disulfides connect Cys292/Cys301, Cys297/Cys312, and Cys314/Cys323. O-linked (Xyl...) (chondroitin sulfate) serine glycosylation is present at Ser302. Positions 312–323 constitute an EGF-like 5 domain; that stretch reads CVCEEGYQGPDC. Fibronectin type-III domains are found at residues 328–420, 421–505, 506–595, 596–687, 688–777, 778–865, 866–955, 956–1042, and 1043–1130; these read PPED…TPQG, LQFK…TVID, GPTQ…TEID, APKN…TELD, SPRD…FRPI, SHLH…TGID, PPKD…AMDN, PVDL…TLLD, and PPAN…TGGR. Residues Asn392, Asn470, and Asn581 are each glycosylated (N-linked (GlcNAc...) asparagine). Phosphoserine is present on Ser724. Residues Asn791, Asn874, Asn1036, Asn1046, and Asn1261 are each glycosylated (N-linked (GlcNAc...) asparagine). The Fibrinogen C-terminal domain occupies 1129–1344; sequence GRVFPHPQDC…FVEMKMRPYN (216 aa).

It belongs to the tenascin family. As to quaternary structure, forms oligomers. Interacts with CNTN1, TNC, and FN1. Interacts with BCAN and ACAN in a calcium-dependent manner. Interacts with SCN2B, PTPRZ1, and CSPG3. Contains N-linked oligosaccharides, O-linked sialylated structures and O-linked chondroitin sulfate glycosaminoglycans. Contains N-linked oligosaccharides with a sulfated carbohydrate structure. O-glycosylated on Thr-36 or Thr-37 with a core 1 or possibly core 8 glycan. Brain specific.

It localises to the secreted. It is found in the extracellular space. The protein localises to the extracellular matrix. Its function is as follows. Neural extracellular matrix (ECM) protein involved in interactions with different cells and matrix components. These interactions can influence cellular behavior by either evoking a stable adhesion and differentiation, or repulsion and inhibition of neurite growth. Binding to cell surface gangliosides inhibits RGD-dependent integrin-mediated cell adhesion and results in an inhibition of PTK2/FAK1 (FAK) phosphorylation and cell detachment. Binding to membrane surface sulfatides results in a oligodendrocyte adhesion and differentiation. Interaction with CNTN1 induces a repulsion of neurons and an inhibition of neurite outgrowth. Interacts with SCN2B may play a crucial role in clustering and regulation of activity of sodium channels at nodes of Ranvier. TNR-linked chondroitin sulfate glycosaminoglycans are involved in the interaction with FN1 and mediate inhibition of cell adhesion and neurite outgrowth. The highly regulated addition of sulfated carbohydrate structure may modulate the adhesive properties of TNR over the course of development and during synapse maintenance. This is Tenascin-R (TNR) from Homo sapiens (Human).